Consider the following 274-residue polypeptide: Cyclase-like protein 1 (274 aa).

Positions 1–18 (MAASRLALLLLVLAVAAA) are cleaved as a signal peptide.

It belongs to the Cyclase 1 superfamily. Highly expressed in leaf sheaths. Expressed in leaf collars.

It localises to the secreted. Its subcellular location is the extracellular space. It is found in the extracellular matrix. Functionally, may be involved in response to stresses. The sequence is that of Cyclase-like protein 1 from Oryza sativa subsp. japonica (Rice).